The sequence spans 296 residues: 4-diphosphocytidyl-2-C-methyl-D-erythritol kinase (296 aa).

Lys11 is an active-site residue. ATP is bound at residue 96–106 (PVSSGLAGGSA). Asp136 is a catalytic residue.

This sequence belongs to the GHMP kinase family. IspE subfamily.

The catalysed reaction is 4-CDP-2-C-methyl-D-erythritol + ATP = 4-CDP-2-C-methyl-D-erythritol 2-phosphate + ADP + H(+). Its pathway is isoprenoid biosynthesis; isopentenyl diphosphate biosynthesis via DXP pathway; isopentenyl diphosphate from 1-deoxy-D-xylulose 5-phosphate: step 3/6. Its function is as follows. Catalyzes the phosphorylation of the position 2 hydroxy group of 4-diphosphocytidyl-2C-methyl-D-erythritol. In Anaplasma phagocytophilum (strain HZ), this protein is 4-diphosphocytidyl-2-C-methyl-D-erythritol kinase.